We begin with the raw amino-acid sequence, 171 residues long: 3-hydroxydecanoyl-[acyl-carrier-protein] dehydratase (171 aa).

The active site involves histidine 70.

This sequence belongs to the thioester dehydratase family. FabA subfamily. Homodimer.

It localises to the cytoplasm. The catalysed reaction is a (3R)-hydroxyacyl-[ACP] = a (2E)-enoyl-[ACP] + H2O. It carries out the reaction (3R)-hydroxydecanoyl-[ACP] = (2E)-decenoyl-[ACP] + H2O. It catalyses the reaction (2E)-decenoyl-[ACP] = (3Z)-decenoyl-[ACP]. Its pathway is lipid metabolism; fatty acid biosynthesis. Its function is as follows. Necessary for the introduction of cis unsaturation into fatty acids. Catalyzes the dehydration of (3R)-3-hydroxydecanoyl-ACP to E-(2)-decenoyl-ACP and then its isomerization to Z-(3)-decenoyl-ACP. Can catalyze the dehydratase reaction for beta-hydroxyacyl-ACPs with saturated chain lengths up to 16:0, being most active on intermediate chain length. This chain is 3-hydroxydecanoyl-[acyl-carrier-protein] dehydratase, found in Shewanella loihica (strain ATCC BAA-1088 / PV-4).